Consider the following 61-residue polypeptide: Large ribosomal subunit protein bL32 (61 aa).

It belongs to the bacterial ribosomal protein bL32 family.

This chain is Large ribosomal subunit protein bL32, found in Cytophaga hutchinsonii (strain ATCC 33406 / DSM 1761 / CIP 103989 / NBRC 15051 / NCIMB 9469 / D465).